Consider the following 261-residue polypeptide: Glucanase inhibitor protein 3 (261 aa).

Positions 1–21 (MKVLSSLAAALIALSAVDVEA) are cleaved as a signal peptide. The Peptidase S1 domain maps to 29–260 (ILGGGKVPVG…GIEWINSVIK (232 aa)). A disulfide bond links Cys56 and Cys72. An N-linked (GlcNAc...) asparagine glycan is attached at Asn108. Disulfide bonds link Cys183-Cys195 and Cys205-Cys236.

Belongs to the peptidase S1 family.

The protein localises to the secreted. Functionally, secreted effector that suppresses host plant glucan elicitor-mediated defense responses. Targets host endoglucanases and inhibits the endoglucanase-mediated release of elicitor-active glucan oligosaccharides from P.sojae cell walls. The polypeptide is Glucanase inhibitor protein 3 (GIP3) (Phytophthora sojae (strain P6497) (Soybean stem and root rot agent)).